The chain runs to 164 residues: FMN reductase (NADH) RutF (164 aa).

The protein belongs to the non-flavoprotein flavin reductase family. RutF subfamily.

The catalysed reaction is FMNH2 + NAD(+) = FMN + NADH + 2 H(+). Its function is as follows. Catalyzes the reduction of FMN to FMNH2 which is used to reduce pyrimidine by RutA via the Rut pathway. This chain is FMN reductase (NADH) RutF, found in Escherichia coli (strain K12 / MC4100 / BW2952).